Reading from the N-terminus, the 258-residue chain is tRNA pseudouridine synthase A (258 aa).

The Nucleophile role is filled by Asp52. Tyr110 lines the substrate pocket.

It belongs to the tRNA pseudouridine synthase TruA family. As to quaternary structure, homodimer.

It catalyses the reaction uridine(38/39/40) in tRNA = pseudouridine(38/39/40) in tRNA. In terms of biological role, formation of pseudouridine at positions 38, 39 and 40 in the anticodon stem and loop of transfer RNAs. The sequence is that of tRNA pseudouridine synthase A from Francisella tularensis subsp. holarctica (strain LVS).